Reading from the N-terminus, the 34-residue chain is Brevinin-2Rf (34 aa).

An intrachain disulfide couples Cys-28 to Cys-34.

Expressed by the skin glands.

It is found in the secreted. Functionally, antimicrobial peptide. In Pelophylax ridibundus (Marsh frog), this protein is Brevinin-2Rf.